An 829-amino-acid chain; its full sequence is Periplasmic nitrate reductase (829 aa).

The segment at residues 1–30 is a signal peptide (tat-type signal); that stretch reads MKLSRRDFMKANAVAAAAAVAGVSAPTLAA. Positions 41–97 constitute a 4Fe-4S Mo/W bis-MGD-type domain; that stretch reads IKWDKAPCRFCGTGCSVLVGSQDGRVVATQGDPDAPVNRGLNCIKGYFLSKIMYGED. [4Fe-4S] cluster contacts are provided by cysteine 48, cysteine 51, cysteine 55, and cysteine 83. Mo-bis(molybdopterin guanine dinucleotide) contacts are provided by residues lysine 85, glutamine 152, asparagine 177, cysteine 181, 214-221, 245-249, 264-266, methionine 374, glutamine 378, asparagine 484, 510-511, lysine 533, aspartate 560, and 719-728; these read WGSNMAEM, STFEH, QTD, SD, and TGRVLEHWHT. Substrate is bound at residue phenylalanine 795. Mo-bis(molybdopterin guanine dinucleotide) is bound by residues asparagine 803 and lysine 820.

It belongs to the prokaryotic molybdopterin-containing oxidoreductase family. NasA/NapA/NarB subfamily. Component of the periplasmic nitrate reductase NapAB complex composed of NapA and NapB. It depends on [4Fe-4S] cluster as a cofactor. Mo-bis(molybdopterin guanine dinucleotide) serves as cofactor. Predicted to be exported by the Tat system. The position of the signal peptide cleavage has not been experimentally proven.

The protein localises to the periplasm. It catalyses the reaction 2 Fe(II)-[cytochrome] + nitrate + 2 H(+) = 2 Fe(III)-[cytochrome] + nitrite + H2O. Catalytic subunit of the periplasmic nitrate reductase complex NapAB. Receives electrons from NapB and catalyzes the reduction of nitrate to nitrite. The sequence is that of Periplasmic nitrate reductase from Aeromonas salmonicida (strain A449).